We begin with the raw amino-acid sequence, 60 residues long: Large ribosomal subunit protein bL32 (60 aa).

Residues 1 to 25 (MAVQQNKKSPSKRGMHRSHNALNVP) are disordered. Basic residues predominate over residues 9 to 19 (SPSKRGMHRSH).

The protein belongs to the bacterial ribosomal protein bL32 family.

In Polaromonas naphthalenivorans (strain CJ2), this protein is Large ribosomal subunit protein bL32.